The primary structure comprises 937 residues: Protein SEY1 homolog (937 aa).

The Cytoplasmic segment spans residues 1 to 848 (MEKGVEKTQI…ETGSKMSLKN (848 aa)). Residues 34 to 280 (GFSYNVIAVL…IPSDGFAQYC (247 aa)) form the GB1/RHD3-type G domain. 44 to 51 (GSQSSGKS) lines the GTP pocket. Coiled-coil stretches lie at residues 319–339 (NKEI…NFKE) and 725–750 (YLDE…IIIQ). The helical transmembrane segment at 849 to 869 (VPVVFWIILLLFGWNEILFFI) threads the bilayer. The Lumenal portion of the chain corresponds to 870-872 (RMF). The helical transmembrane segment at 873–893 (FKLNVILPLFFAAAFIVSTFV) threads the bilayer. The Cytoplasmic portion of the chain corresponds to 894-937 (YNGNTQALSYINKIIFYMAKNSYNFFKHIQAISNPPPKNVQKQE).

It belongs to the TRAFAC class dynamin-like GTPase superfamily. GB1/RHD3 GTPase family. RHD3 subfamily.

It localises to the endoplasmic reticulum membrane. Its function is as follows. Probable GTP-binding protein involved in generating and maintaining the structure of the tubular endoplasmic reticulum network. The protein is Protein SEY1 homolog of Plasmodium falciparum (isolate 3D7).